A 564-amino-acid chain; its full sequence is Eukaryotic translation initiation factor 3 subunit L (564 aa).

Position 2 is an N-acetylserine (Ser2). Ser21 carries the phosphoserine modification. Residues 331–537 (DAIRVFANIL…IHIADTKVAR (207 aa)) form the PCI domain. 2 positions are modified to N6-acetyllysine: Lys465 and Lys549.

As to quaternary structure, component of the eukaryotic translation initiation factor 3 (eIF-3) complex, which is composed of 13 subunits: EIF3A, EIF3B, EIF3C, EIF3D, EIF3E, EIF3F, EIF3G, EIF3H, EIF3I, EIF3J, EIF3K, EIF3L and EIF3M. The eIF-3 complex appears to include 3 stable modules: module A is composed of EIF3A, EIF3B, EIF3G and EIF3I; module B is composed of EIF3F, EIF3H, and EIF3M; and module C is composed of EIF3C, EIF3D, EIF3E, EIF3K and EIF3L. EIF3C of module C binds EIF3B of module A and EIF3H of module B, thereby linking the three modules. EIF3J is a labile subunit that binds to the eIF-3 complex via EIF3B. The eIF-3 complex interacts with RPS6KB1 under conditions of nutrient depletion. Mitogenic stimulation leads to binding and activation of a complex composed of MTOR and RPTOR, leading to phosphorylation and release of RPS6KB1 and binding of EIF4B to eIF-3. Interacts with RRN3.

The protein localises to the cytoplasm. Component of the eukaryotic translation initiation factor 3 (eIF-3) complex, which is required for several steps in the initiation of protein synthesis. The eIF-3 complex associates with the 40S ribosome and facilitates the recruitment of eIF-1, eIF-1A, eIF-2:GTP:methionyl-tRNAi and eIF-5 to form the 43S pre-initiation complex (43S PIC). The eIF-3 complex stimulates mRNA recruitment to the 43S PIC and scanning of the mRNA for AUG recognition. The eIF-3 complex is also required for disassembly and recycling of post-termination ribosomal complexes and subsequently prevents premature joining of the 40S and 60S ribosomal subunits prior to initiation. The eIF-3 complex specifically targets and initiates translation of a subset of mRNAs involved in cell proliferation, including cell cycling, differentiation and apoptosis, and uses different modes of RNA stem-loop binding to exert either translational activation or repression. Its function is as follows. (Microbial infection) In case of FCV infection, plays a role in the ribosomal termination-reinitiation event leading to the translation of VP2. The protein is Eukaryotic translation initiation factor 3 subunit L of Homo sapiens (Human).